The following is a 396-amino-acid chain: Pyridinium-3,5-bisthiocarboxylic acid mononucleotide nickel insertion protein (396 aa).

The protein belongs to the LarC family.

It catalyses the reaction Ni(II)-pyridinium-3,5-bisthiocarboxylate mononucleotide = pyridinium-3,5-bisthiocarboxylate mononucleotide + Ni(2+). Functionally, involved in the biosynthesis of a nickel-pincer cofactor ((SCS)Ni(II) pincer complex). Binds Ni(2+), and functions in nickel delivery to pyridinium-3,5-bisthiocarboxylic acid mononucleotide (P2TMN), to form the mature cofactor. Is thus probably required for the activation of nickel-pincer cofactor-dependent enzymes. The sequence is that of Pyridinium-3,5-bisthiocarboxylic acid mononucleotide nickel insertion protein from Moorella thermoacetica (strain ATCC 39073 / JCM 9320).